We begin with the raw amino-acid sequence, 118 residues long: Cycloviolacin-O11 (118 aa).

The signal sequence occupies residues 1–22 (MEMKNMVVGLFLIAAFALPALA). Residues 23-84 (TSFEKDFITH…THSNSINALG (62 aa)) constitute a propeptide that is removed on maturation. The cyclopeptide (Gly-Asn) cross-link spans 85-115 (GTLPCGESCVWIPCISAVVGCSCKSKVCYKN). Intrachain disulfides connect C89–C105, C93–C107, and C98–C112. Positions 116–118 (SLA) are excised as a propeptide.

In terms of processing, cycloviolacin-O11 is a cyclic peptide. As to expression, expressed in leaves, petals and petioles but not in roots and runners (at protein level).

Probably participates in a plant defense mechanism. The chain is Cycloviolacin-O11 (Voc2) from Viola odorata (Sweet violet).